The sequence spans 37 residues: Large ribosomal subunit protein bL36A (37 aa).

This sequence belongs to the bacterial ribosomal protein bL36 family.

The chain is Large ribosomal subunit protein bL36A from Actinobacillus pleuropneumoniae serotype 5b (strain L20).